Consider the following 1363-residue polypeptide: Zinc finger protein 541 (1363 aa).

2 disordered regions span residues 1-23 and 106-137; these read MEPY…SFSE and LGAL…SPQN. 3 C2H2-type zinc fingers span residues 140 to 162, 168 to 190, and 196 to 221; these read LDCS…YLTH, HVCK…MLTH, and FVCI…EVQH. 4 disordered regions span residues 232–269, 286–387, 440–532, and 574–741; these read EEEA…GSVL, KIPS…GWPE, VASR…PGGL, and QVAT…GYRL. The span at 311–321 shows a compositional bias: polar residues; that stretch reads SLGSSSCTPAS. Basic and acidic residues predominate over residues 335–345; that stretch reads EETHPPRKEAA. The span at 453-465 shows a compositional bias: low complexity; sequence PSSTPTSVEPSPS. The span at 597-608 shows a compositional bias: pro residues; it reads GPWPPQTLPPAP. The segment covering 659–670 has biased composition (low complexity); that stretch reads PPSLTGPGLLPS. The segment at 838–860 adopts a C2H2-type 4 zinc-finger fold; that stretch reads FVCKNCSQMFYTEKGLSSHMCFH. The disordered stretch occupies residues 935-978; sequence QGQEKDGEERDSKESCQYRKRKKRPQPKALFAPPAPSALGEPGP. Residues 937 to 951 are compositionally biased toward basic and acidic residues; the sequence is QEKDGEERDSKESCQ. The region spanning 1063–1155 is the ELM2 domain; it reads PHINVGSRFQ…VALETLLLRG (93 aa). The 52-residue stretch at 1170–1221 folds into the SANT domain; the sequence is TGSDIWTPMEKRLFKKAFCAHKKDFYLIHKMIQTKSVAQCVEYYYIWKKMVK. Residues 1243 to 1298 form a disordered region; the sequence is RTEDKVTCSPRERPTHRPTPELKIKTKSYRRESILHSSPSAAPKRTPEPPGSVESQ. Residues 1244 to 1276 show a composition bias toward basic and acidic residues; sequence TEDKVTCSPRERPTHRPTPELKIKTKSYRRESI. A C2H2-type 5 zinc finger spans residues 1301 to 1323; sequence FPCRECERVFDKIKSRNAHMKRH. A disordered region spans residues 1343-1363; it reads LKEEEEEEEEELGADMGPLQW. Over residues 1345–1355 the composition is skewed to acidic residues; sequence EEEEEEEEELG.

As to quaternary structure, interacts with DNTTIP1. Identified in a complex with KCTD19, HDAC1 and HSPA2. Identified in a complex with HDAC1, HDAC2, DNTTIP1 and KCTD19. Identified in a complex with KCTD19 and HDAC1. Germ-cell-specific. Specifically present in testicular spermatogenic cells, but not in testicular and mature sperm. During spermatogenesis, it is present in spermatocytes and round spermatids only (at protein level).

Its subcellular location is the nucleus. In terms of biological role, transcription regulator which is essential for male fertility and for the completion of meiotic prophase in spermatocytes. Regulates progression of the pachytene stage of meiotic prophase by activating the expression of genes involved in meiosis and post-meiosis during spermatogenesis. Maintains the repression of pre-pachytene transcriptional programs, including meiotic double-strand breaks (DSB) formation genes in pachytene spermatocytes and suppresses aberrant DSB formation after mid-pachytene, thus ensuring meiosis progression. The polypeptide is Zinc finger protein 541 (Znf541) (Mus musculus (Mouse)).